A 474-amino-acid chain; its full sequence is 3-isopropylmalate dehydratase large subunit (474 aa).

Residues C353, C414, and C417 each contribute to the [4Fe-4S] cluster site.

Belongs to the aconitase/IPM isomerase family. LeuC type 1 subfamily. As to quaternary structure, heterodimer of LeuC and LeuD. It depends on [4Fe-4S] cluster as a cofactor.

The enzyme catalyses (2R,3S)-3-isopropylmalate = (2S)-2-isopropylmalate. Its pathway is amino-acid biosynthesis; L-leucine biosynthesis; L-leucine from 3-methyl-2-oxobutanoate: step 2/4. In terms of biological role, catalyzes the isomerization between 2-isopropylmalate and 3-isopropylmalate, via the formation of 2-isopropylmaleate. This chain is 3-isopropylmalate dehydratase large subunit, found in Xylella fastidiosa (strain M12).